Reading from the N-terminus, the 1571-residue chain is Phosphatidylinositol 3-kinase 1 (1571 aa).

Low complexity predominate over residues methionine 1–asparagine 73. Disordered stretches follow at residues methionine 1–asparagine 119, glycine 157–asparagine 195, and asparagine 283–arginine 430. Residues isoleucine 74–glutamine 85 show a composition bias toward basic and acidic residues. Residues asparagine 101–asparagine 119 are compositionally biased toward low complexity. A compositionally biased stretch (basic and acidic residues) spans asparagine 283–proline 292. Residues threonine 294–threonine 324 are compositionally biased toward low complexity. Residues asparagine 325–lysine 337 are compositionally biased toward polar residues. Composition is skewed to low complexity over residues lysine 360–lysine 382 and asparagine 405–asparagine 424. The PI3K-ABD domain maps to isoleucine 530–serine 627. The PI3K-RBD domain occupies glycine 700–glutamine 789. A C2 PI3K-type domain is found at isoleucine 851–asparagine 1020. Residues glutamine 1040–alanine 1216 form the PIK helical domain. One can recognise a PI3K/PI4K catalytic domain in the interval isoleucine 1280 to threonine 1558. The G-loop stretch occupies residues tyrosine 1286–leucine 1292. Positions glycine 1424 to asparagine 1432 are catalytic loop. Residues histidine 1443 to threonine 1469 are activation loop.

This sequence belongs to the PI3/PI4-kinase family.

The catalysed reaction is a 1,2-diacyl-sn-glycero-3-phospho-(1D-myo-inositol) + ATP = a 1,2-diacyl-sn-glycero-3-phospho-(1D-myo-inositol-3-phosphate) + ADP + H(+). This Dictyostelium discoideum (Social amoeba) protein is Phosphatidylinositol 3-kinase 1 (pikA).